Consider the following 418-residue polypeptide: Glutamyl-tRNA reductase (418 aa).

Substrate contacts are provided by residues 49-52 (TCNR), serine 109, 114-116 (EPQ), and glutamine 120. Cysteine 50 serves as the catalytic Nucleophile. 189 to 194 (GAGETI) lines the NADP(+) pocket.

Belongs to the glutamyl-tRNA reductase family. Homodimer.

It catalyses the reaction (S)-4-amino-5-oxopentanoate + tRNA(Glu) + NADP(+) = L-glutamyl-tRNA(Glu) + NADPH + H(+). Its pathway is porphyrin-containing compound metabolism; protoporphyrin-IX biosynthesis; 5-aminolevulinate from L-glutamyl-tRNA(Glu): step 1/2. Catalyzes the NADPH-dependent reduction of glutamyl-tRNA(Glu) to glutamate 1-semialdehyde (GSA). The protein is Glutamyl-tRNA reductase of Escherichia coli O45:K1 (strain S88 / ExPEC).